The primary structure comprises 303 residues: Sulfate adenylyltransferase subunit 2 (303 aa).

The protein belongs to the PAPS reductase family. CysD subfamily. As to quaternary structure, heterodimer composed of CysD, the smaller subunit, and CysN.

It carries out the reaction sulfate + ATP + H(+) = adenosine 5'-phosphosulfate + diphosphate. Its pathway is sulfur metabolism; hydrogen sulfide biosynthesis; sulfite from sulfate: step 1/3. Its function is as follows. With CysN forms the ATP sulfurylase (ATPS) that catalyzes the adenylation of sulfate producing adenosine 5'-phosphosulfate (APS) and diphosphate, the first enzymatic step in sulfur assimilation pathway. APS synthesis involves the formation of a high-energy phosphoric-sulfuric acid anhydride bond driven by GTP hydrolysis by CysN coupled to ATP hydrolysis by CysD. This Phocaeicola vulgatus (strain ATCC 8482 / DSM 1447 / JCM 5826 / CCUG 4940 / NBRC 14291 / NCTC 11154) (Bacteroides vulgatus) protein is Sulfate adenylyltransferase subunit 2.